Consider the following 150-residue polypeptide: Peptide deformylase 2 (150 aa).

Fe cation contacts are provided by cysteine 89 and histidine 131. Residue glutamate 132 is part of the active site. Histidine 135 contributes to the Fe cation binding site.

Belongs to the polypeptide deformylase family. Fe(2+) is required as a cofactor.

The enzyme catalyses N-terminal N-formyl-L-methionyl-[peptide] + H2O = N-terminal L-methionyl-[peptide] + formate. Functionally, removes the formyl group from the N-terminal Met of newly synthesized proteins. Requires at least a dipeptide for an efficient rate of reaction. N-terminal L-methionine is a prerequisite for activity but the enzyme has broad specificity at other positions. This chain is Peptide deformylase 2, found in Clostridium acetobutylicum (strain ATCC 824 / DSM 792 / JCM 1419 / IAM 19013 / LMG 5710 / NBRC 13948 / NRRL B-527 / VKM B-1787 / 2291 / W).